Consider the following 114-residue polypeptide: TYRO protein tyrosine kinase-binding protein (114 aa).

An N-terminal signal peptide occupies residues 1–21 (MGALEPSWCLLFLPVLLTVGG). The Extracellular segment spans residues 22–42 (LSPVQAQSDTFPRCDCSSVSP). A helical transmembrane segment spans residues 43–63 (GVLAGIVLGDLVLTLLIALAV). Asp-52 serves as a coordination point for Ca(2+). At 64–114 (YSLGRLVSRGQGTAEGTRKQHIAETESPYQELQGQRPEVYSDLNTQRQYYR) the chain is on the cytoplasmic side. Positions 74-107 (QGTAEGTRKQHIAETESPYQELQGQRPEVYSDLN) are disordered. Positions 81 to 109 (RKQHIAETESPYQELQGQRPEVYSDLNTQ) constitute an ITAM domain. Phosphotyrosine occurs at positions 92 and 103.

It belongs to the TYROBP family. In terms of assembly, homodimer; disulfide-linked. Homotrimer; disulfide-linked. Homotetramer; disulfide-linked. Homotrimers and homotetramers form when low levels of partner receptors are available and are competitive with assembly with interacting receptors. They may represent alternative oligomerization states or may be intermediates in the receptor assembly process. Binding of a metal cation aids in homooligomerization through coordination of the metal ion by the subunits of the oligomer. Interacts with TREM1. Interacts with TREM2. Interacts with TREM3. Interacts with CLECSF5. Interacts with CD300LB and CD300C2. Interacts with CD300E. Interacts (via ITAM domain) with SYK (via SH2 domains); activates SYK mediating neutrophil and macrophage integrin-mediated activation. Interacts (via transmembrane domain) with KLRK1 isoform 2 (via transmembrane domain); the interaction is required for KLRK1 NK cell surface expression and NK cell-mediated cytotoxicity. Interacts with KLRC2. Interacts with CD300H. Interacts with KLRD1. Interacts with KLRA4 and KLRA8. Tyrosine phosphorylated. Following ligand binding by associated receptors, tyrosine phosphorylated in the ITAM domain which leads to activation of additional tyrosine kinases and subsequent cell activation. As to expression, expressed on microglia (at protein level). Expressed on oligodendrocytes (at protein level). Expressed on macrophages and osteoclasts. Expressed on dendritic cells in liver, spleen, kidney and lung with highest levels in liver dendritic cells.

It localises to the cell membrane. Adapter protein which non-covalently associates with activating receptors found on the surface of a variety of immune cells to mediate signaling and cell activation following ligand binding by the receptors. TYROBP is tyrosine-phosphorylated in the ITAM domain following ligand binding by the associated receptors which leads to activation of additional tyrosine kinases and subsequent cell activation. Also has an inhibitory role in some cells. Non-covalently associates with activating receptors of the CD300 family to mediate cell activation. Also mediates cell activation through association with activating receptors of the CD200R family. Required for neutrophil activation mediated by integrin. Required for the activation of myeloid cells mediated by the CLEC5A/MDL1 receptor. Associates with natural killer (NK) cell receptors such as the KLRD1/KLRC2 heterodimer to mediate NK cell activation. Also associates non-covalently with the NK cell receptors KLRA4/LY49D and KLRA8/LY49H which leads to NK cell activation. Associates with TREM1 to mediate activation of neutrophils and monocytes. Associates with TREM2 on monocyte-derived dendritic cells to mediate up-regulation of chemokine receptor CCR7 and dendritic cell maturation and survival. Association with TREM2 mediates cytokine-induced formation of multinucleated giant cells which are formed by the fusion of macrophages. Stabilizes the TREM2 C-terminal fragment (TREM2-CTF) which is produced by TREM2 ectodomain shedding. In microglia, required with TREM2 for phagocytosis of apoptotic neurons. Required with ITGAM/CD11B in microglia to control production of microglial superoxide ions which promote the neuronal apoptosis that occurs during brain development. Promotes pro-inflammatory responses in microglia following nerve injury which accelerates degeneration of injured neurons. Positively regulates the expression of the IRAK3/IRAK-M kinase and IL10 production by liver dendritic cells and inhibits their T cell allostimulatory ability. Negatively regulates B cell proliferation. Required for CSF1-mediated osteoclast cytoskeletal organization. Positively regulates multinucleation during osteoclast development. The sequence is that of TYRO protein tyrosine kinase-binding protein from Mus musculus (Mouse).